A 409-amino-acid chain; its full sequence is Dihydrolipoyllysine-residue succinyltransferase component of 2-oxoglutarate dehydrogenase complex (409 aa).

The 76-residue stretch at 2–77 folds into the Lipoyl-binding domain; the sequence is AIEIKAPTFP…LSNELLGKLN (76 aa). At Lys43 the chain carries N6-lipoyllysine. In terms of domain architecture, Peripheral subunit-binding (PSBD) spans 112 to 149; the sequence is ILSPAARKLAEEAGIDPNSIAGTGKGGRVTKEDVVAAV. Active-site residues include His380 and Asp384.

Belongs to the 2-oxoacid dehydrogenase family. Forms a 24-polypeptide structural core with octahedral symmetry. Part of the 2-oxoglutarate dehydrogenase (OGDH) complex composed of E1 (2-oxoglutarate dehydrogenase), E2 (dihydrolipoamide succinyltransferase) and E3 (dihydrolipoamide dehydrogenase); the complex contains multiple copies of the three enzymatic components (E1, E2 and E3). (R)-lipoate serves as cofactor.

The enzyme catalyses N(6)-[(R)-dihydrolipoyl]-L-lysyl-[protein] + succinyl-CoA = N(6)-[(R)-S(8)-succinyldihydrolipoyl]-L-lysyl-[protein] + CoA. Its pathway is amino-acid degradation; L-lysine degradation via saccharopine pathway; glutaryl-CoA from L-lysine: step 6/6. Functionally, E2 component of the 2-oxoglutarate dehydrogenase (OGDH) complex which catalyzes the second step in the conversion of 2-oxoglutarate to succinyl-CoA and CO(2). This is Dihydrolipoyllysine-residue succinyltransferase component of 2-oxoglutarate dehydrogenase complex (sucB) from Pseudomonas aeruginosa (strain ATCC 15692 / DSM 22644 / CIP 104116 / JCM 14847 / LMG 12228 / 1C / PRS 101 / PAO1).